The chain runs to 2197 residues: Activating signal cointegrator 1 complex subunit 3 (2197 aa).

Residue serine 12 is modified to Phosphoserine. Coiled-coil stretches lie at residues 18–80 (KQDN…AKQI) and 328–356 (IQSEQEKQLMKQYRREEKRIARREKKAGE). One can recognise a Helicase ATP-binding 1 domain in the interval 487-670 (DTAYNTNENM…FLHVNPYIGL (184 aa)). 500-507 (APTGAGKT) is an ATP binding site. At lysine 573 the chain carries N6-acetyllysine. The short motif at 612-615 (DEVH) is the DEVH box element. Residues 697-915 (QLNNMDEVCY…GTVTNVEEAV (219 aa)) enclose the Helicase C-terminal 1 domain. Positions 979–1288 (STDLGRTASH…GAEAVCIINF (310 aa)) constitute an SEC63 1 domain. Residues 1337–1512 (HTLYHTDCNV…WLNIKQMGLF (176 aa)) form the Helicase ATP-binding 2 domain. 1350–1357 (APTGSGKT) provides a ligand contact to ATP. Positions 1454-1457 (DEIH) match the DEIH box motif. One can recognise a Helicase C-terminal 2 domain in the interval 1565 to 1739 (RMLSSMTKLE…VLSDHLNAEI (175 aa)). Residues 1812–2175 (PLTCGRIASY…YLGLDQQYDI (364 aa)) enclose the SEC63 2 domain.

Belongs to the helicase family. Identified in the ASCC complex that contains ASCC1, ASCC2 and ASCC3. Functions as a scaffolding subunit that interacts directly with both ASCC1 and ASCC2. Interacts directly with ALKBH3, and thereby recruits ALKBH3 to the ASCC complex. Part of the ASC-1/TRIP4 complex, that contains TRIP4, ASCC1, ASCC2 and ASCC3. Part of the RQT (ribosome quality control trigger) complex, that contains ASCC2, ASCC3 and TRIP4. Associates with ribosomes; recruited to collided ribosomes. Interacts with ZCCHC4. Interacts with ZNF598. Interacts with RPS3.

The protein resides in the nucleus. Its subcellular location is the nucleus speckle. The protein localises to the cytoplasm. It localises to the cytosol. The enzyme catalyses Couples ATP hydrolysis with the unwinding of duplex DNA by translocating in the 3'-5' direction.. The catalysed reaction is ATP + H2O = ADP + phosphate + H(+). In terms of biological role, ATPase involved both in DNA repair and rescue of stalled ribosomes. 3'-5' DNA helicase involved in repair of alkylated DNA: promotes DNA unwinding to generate single-stranded substrate needed for ALKBH3, enabling ALKBH3 to process alkylated N3-methylcytosine (3mC) within double-stranded regions. Also involved in activation of the ribosome quality control (RQC) pathway, a pathway that degrades nascent peptide chains during problematic translation. Drives the splitting of stalled ribosomes that are ubiquitinated in a ZNF598-dependent manner, as part of the ribosome quality control trigger (RQT) complex. Part of the ASC-1 complex that enhances NF-kappa-B, SRF and AP1 transactivation. In Rattus norvegicus (Rat), this protein is Activating signal cointegrator 1 complex subunit 3 (Ascc3).